The chain runs to 432 residues: Asparagine--tRNA ligase (432 aa).

Belongs to the class-II aminoacyl-tRNA synthetase family. As to quaternary structure, homodimer.

It localises to the cytoplasm. It catalyses the reaction tRNA(Asn) + L-asparagine + ATP = L-asparaginyl-tRNA(Asn) + AMP + diphosphate + H(+). This Lactobacillus johnsonii (strain CNCM I-12250 / La1 / NCC 533) protein is Asparagine--tRNA ligase.